The following is a 120-amino-acid chain: MVRVISSQPRKQRKARYNAPHHMRGSLLHAALSKELQGKYKRRSIRVIKGDTVKVLRGDHAGTEGLVDYVITRDARIVVDGVSVKKADGTEVPRPVDPSNVMITDLNLEDKRREQKLSGE.

Residues M1–S26 form a disordered region. Residues R10 to R24 show a composition bias toward basic residues.

This sequence belongs to the universal ribosomal protein uL24 family. Part of the 50S ribosomal subunit.

Functionally, one of two assembly initiator proteins, it binds directly to the 5'-end of the 23S rRNA, where it nucleates assembly of the 50S subunit. Located at the polypeptide exit tunnel on the outside of the subunit. This Methanospirillum hungatei JF-1 (strain ATCC 27890 / DSM 864 / NBRC 100397 / JF-1) protein is Large ribosomal subunit protein uL24.